Reading from the N-terminus, the 358-residue chain is MILSIESSCDDSSLALMSINDASLLYHIKLSQDEEHSTYGGIVPEIASRLHAQRLPEILKKLKAFLNNDLSPIKAVAVTTRPGLSVTLIEGLMMAKALCLGLQVPLICVNHLKGHIYSLLIHKATSDMQAILPKNTSLPQPLGILLVSGGHTQILHMRDFNAISLIAQSLDDSFGESFDKVAKYLGLGYPGGPVIESYATTFMRDFPHIAPHSFPVPLLHNQKLQFSFSGLKNAVRLAIQALPQPLSLKDRGSICAGFQQSACEHIVRKVRLYFQSAQAQDLEHFAIVGGASANTYLRTTLNELCEEYNKQLHLADLAFCADNAAMIGVCAIEHYKRGDFTPIDEAQISPKSLLNDFL.

Positions 111 and 115 each coordinate Fe cation. Substrate-binding positions include 146-150 (LVSGG), Asp-179, Gly-192, and Asn-294. Fe cation is bound at residue Asp-322.

The protein belongs to the KAE1 / TsaD family. Requires Fe(2+) as cofactor.

It localises to the cytoplasm. It carries out the reaction L-threonylcarbamoyladenylate + adenosine(37) in tRNA = N(6)-L-threonylcarbamoyladenosine(37) in tRNA + AMP + H(+). Its function is as follows. Required for the formation of a threonylcarbamoyl group on adenosine at position 37 (t(6)A37) in tRNAs that read codons beginning with adenine. Is involved in the transfer of the threonylcarbamoyl moiety of threonylcarbamoyl-AMP (TC-AMP) to the N6 group of A37, together with TsaE and TsaB. TsaD likely plays a direct catalytic role in this reaction. The sequence is that of tRNA N6-adenosine threonylcarbamoyltransferase from Helicobacter hepaticus (strain ATCC 51449 / 3B1).